Consider the following 173-residue polypeptide: Ribosome maturation factor RimM (173 aa).

Residues 98 to 171 enclose the PRC barrel domain; the sequence is DDQYYYDEII…LITIDALEGL (74 aa).

It belongs to the RimM family. Binds ribosomal protein uS19.

Its subcellular location is the cytoplasm. An accessory protein needed during the final step in the assembly of 30S ribosomal subunit, possibly for assembly of the head region. Essential for efficient processing of 16S rRNA. May be needed both before and after RbfA during the maturation of 16S rRNA. It has affinity for free ribosomal 30S subunits but not for 70S ribosomes. The polypeptide is Ribosome maturation factor RimM (Leuconostoc mesenteroides subsp. mesenteroides (strain ATCC 8293 / DSM 20343 / BCRC 11652 / CCM 1803 / JCM 6124 / NCDO 523 / NBRC 100496 / NCIMB 8023 / NCTC 12954 / NRRL B-1118 / 37Y)).